The chain runs to 82 residues: Small ribosomal subunit protein bS16 (82 aa).

Belongs to the bacterial ribosomal protein bS16 family.

The polypeptide is Small ribosomal subunit protein bS16 (Sodalis glossinidius (strain morsitans)).